A 434-amino-acid chain; its full sequence is Adenylosuccinate synthetase (434 aa).

Residues 15 to 21 (GDEGKGK) and 43 to 45 (GHT) contribute to the GTP site. Residue aspartate 16 is the Proton acceptor of the active site. The Mg(2+) site is built by aspartate 16 and glycine 43. IMP is bound by residues 16 to 19 (DEGK), 41 to 44 (NAGH), threonine 133, arginine 147, glutamine 228, threonine 243, and arginine 307. Catalysis depends on histidine 44, which acts as the Proton donor. 303–309 (SVTGRAR) contacts substrate. GTP-binding positions include arginine 309, 335–337 (KLD), and 418–420 (STG).

Belongs to the adenylosuccinate synthetase family. As to quaternary structure, homodimer. Mg(2+) serves as cofactor.

The protein resides in the cytoplasm. It carries out the reaction IMP + L-aspartate + GTP = N(6)-(1,2-dicarboxyethyl)-AMP + GDP + phosphate + 2 H(+). Its pathway is purine metabolism; AMP biosynthesis via de novo pathway; AMP from IMP: step 1/2. Plays an important role in the de novo pathway of purine nucleotide biosynthesis. Catalyzes the first committed step in the biosynthesis of AMP from IMP. The sequence is that of Adenylosuccinate synthetase from Neisseria gonorrhoeae (strain NCCP11945).